The primary structure comprises 241 residues: Deoxyribose-phosphate aldolase (241 aa).

Catalysis depends on Asp95, which acts as the Proton donor/acceptor. Residue Lys159 is the Schiff-base intermediate with acetaldehyde of the active site. Lys188 functions as the Proton donor/acceptor in the catalytic mechanism.

The protein belongs to the DeoC/FbaB aldolase family. DeoC type 1 subfamily.

Its subcellular location is the cytoplasm. It carries out the reaction 2-deoxy-D-ribose 5-phosphate = D-glyceraldehyde 3-phosphate + acetaldehyde. It participates in carbohydrate degradation; 2-deoxy-D-ribose 1-phosphate degradation; D-glyceraldehyde 3-phosphate and acetaldehyde from 2-deoxy-alpha-D-ribose 1-phosphate: step 2/2. Its function is as follows. Catalyzes a reversible aldol reaction between acetaldehyde and D-glyceraldehyde 3-phosphate to generate 2-deoxy-D-ribose 5-phosphate. The sequence is that of Deoxyribose-phosphate aldolase from Rhodopirellula baltica (strain DSM 10527 / NCIMB 13988 / SH1).